The primary structure comprises 355 residues: Phosphatidylinositol:ceramide inositolphosphotransferase (355 aa).

At 1–44 the chain is on the cytoplasmic side; that stretch reads MISYPFFSLSPPGLVPPPMAVPPVEMYSGSFWNRMRKPLPLRTQ. A helical membrane pass occupies residues 45-65; that stretch reads VIRFTVVFVIVSFILAVALQI. Over 66–89 the chain is Extracellular; it reads THERMPDPKVTKPLPDLGFELLTK. The chain crosses the membrane as a helical span at residues 90-110; the sequence is ISFLSVVTDVLIAFLSSLSFF. Over 111–165 the chain is Cytoplasmic; the sequence is TLWKLYLLHRHCVGSGEPELPCNIPGVSRFFLSVWLCKENCRIELRNVHTIAWIR. A helical transmembrane segment spans residues 166-186; sequence FITSYALLLLFRSLVIVMTSM. Residues 187 to 205 lie on the Extracellular side of the membrane; it reads PTPVDKCQNPPKIENPVKN. A helical transmembrane segment spans residues 206 to 226; the sequence is VILTVLTAGGGSIHCGDLMYS. Residues 227–251 are Cytoplasmic-facing; it reads GHTVILTLHLMFHWIYGAMVHWSFR. Active-site residues include histidine 228, histidine 271, and aspartate 275. The helical transmembrane segment at 252-272 threads the bilayer; it reads PVVTVVAIFGYYCIVASRSHY. The Extracellular segment spans residues 273–275; that stretch reads TDD. The chain crosses the membrane as a helical span at residues 276-296; that stretch reads VLVAIYLTIATFIAVGHNADG. Topologically, residues 297–355 are cytoplasmic; that stretch reads APWQLQLFIRWLPCCGANSREVTEDSQPVMVAFKSEAVDELRERDDSAGLSCEVSTNEV.

It belongs to the sphingomyelin synthase family.

Its subcellular location is the membrane. Bidirectional lipid inositolphosphotransferase capable of converting phosphatidylinositol (PI) and ceramide to inositol-phosphorylceramide (IPC) and diacylglycerol (DAG) and vice versa. Direction is dependent on the relative concentrations of DAG and ceramide as phosphoinositol acceptors. Does not function strictly as a SM synthase. Essential for viability of the pathogenic bloodstream stage of this human protozoan parasite and, consequently, can be considered as potential drug target. The sequence is that of Phosphatidylinositol:ceramide inositolphosphotransferase from Trypanosoma brucei brucei (strain 927/4 GUTat10.1).